Reading from the N-terminus, the 444-residue chain is Trigger factor (444 aa).

The 86-residue stretch at 163–248 (GDIAVIDSPV…VKELRKNVPA (86 aa)) folds into the PPIase FKBP-type domain.

Belongs to the FKBP-type PPIase family. Tig subfamily.

The protein resides in the cytoplasm. The enzyme catalyses [protein]-peptidylproline (omega=180) = [protein]-peptidylproline (omega=0). Functionally, involved in protein export. Acts as a chaperone by maintaining the newly synthesized protein in an open conformation. Functions as a peptidyl-prolyl cis-trans isomerase. The chain is Trigger factor (tig) from Azospirillum brasilense.